The chain runs to 442 residues: Histidine--tRNA ligase (442 aa).

The protein belongs to the class-II aminoacyl-tRNA synthetase family. In terms of assembly, homodimer.

Its subcellular location is the cytoplasm. The catalysed reaction is tRNA(His) + L-histidine + ATP = L-histidyl-tRNA(His) + AMP + diphosphate + H(+). This chain is Histidine--tRNA ligase, found in Wolinella succinogenes (strain ATCC 29543 / DSM 1740 / CCUG 13145 / JCM 31913 / LMG 7466 / NCTC 11488 / FDC 602W) (Vibrio succinogenes).